Consider the following 227-residue polypeptide: Cytochrome c oxidase subunit 2 (227 aa).

Residues 1 to 14 (MAYPFQLGFQDATS) are Mitochondrial intermembrane-facing. Residues 15–45 (PIMEELLHFHDHTLMIVFLISSLVLYVISAM) traverse the membrane as a helical segment. The Mitochondrial matrix portion of the chain corresponds to 46-59 (LTTNLTHTSTMDAQ). A helical transmembrane segment spans residues 60–87 (EVETIWTILPAIILITIALPSLRILYMM). The Mitochondrial intermembrane segment spans residues 88 to 227 (DEINNPAMTI…YFEKWSVSML (140 aa)). Residues H161, C196, E198, C200, H204, and M207 each contribute to the Cu cation site. E198 provides a ligand contact to Mg(2+). Y218 is modified (phosphotyrosine).

Belongs to the cytochrome c oxidase subunit 2 family. As to quaternary structure, component of the cytochrome c oxidase (complex IV, CIV), a multisubunit enzyme composed of 14 subunits. The complex is composed of a catalytic core of 3 subunits MT-CO1, MT-CO2 and MT-CO3, encoded in the mitochondrial DNA, and 11 supernumerary subunits COX4I, COX5A, COX5B, COX6A, COX6B, COX6C, COX7A, COX7B, COX7C, COX8 and NDUFA4, which are encoded in the nuclear genome. The complex exists as a monomer or a dimer and forms supercomplexes (SCs) in the inner mitochondrial membrane with NADH-ubiquinone oxidoreductase (complex I, CI) and ubiquinol-cytochrome c oxidoreductase (cytochrome b-c1 complex, complex III, CIII), resulting in different assemblies (supercomplex SCI(1)III(2)IV(1) and megacomplex MCI(2)III(2)IV(2)). Found in a complex with TMEM177, COA6, COX18, COX20, SCO1 and SCO2. Interacts with TMEM177 in a COX20-dependent manner. Interacts with COX20. Interacts with COX16. Cu cation is required as a cofactor.

Its subcellular location is the mitochondrion inner membrane. It catalyses the reaction 4 Fe(II)-[cytochrome c] + O2 + 8 H(+)(in) = 4 Fe(III)-[cytochrome c] + 2 H2O + 4 H(+)(out). Functionally, component of the cytochrome c oxidase, the last enzyme in the mitochondrial electron transport chain which drives oxidative phosphorylation. The respiratory chain contains 3 multisubunit complexes succinate dehydrogenase (complex II, CII), ubiquinol-cytochrome c oxidoreductase (cytochrome b-c1 complex, complex III, CIII) and cytochrome c oxidase (complex IV, CIV), that cooperate to transfer electrons derived from NADH and succinate to molecular oxygen, creating an electrochemical gradient over the inner membrane that drives transmembrane transport and the ATP synthase. Cytochrome c oxidase is the component of the respiratory chain that catalyzes the reduction of oxygen to water. Electrons originating from reduced cytochrome c in the intermembrane space (IMS) are transferred via the dinuclear copper A center (CU(A)) of subunit 2 and heme A of subunit 1 to the active site in subunit 1, a binuclear center (BNC) formed by heme A3 and copper B (CU(B)). The BNC reduces molecular oxygen to 2 water molecules using 4 electrons from cytochrome c in the IMS and 4 protons from the mitochondrial matrix. The polypeptide is Cytochrome c oxidase subunit 2 (MT-CO2) (Macrotus californicus (Californian leaf-nosed bat)).